Consider the following 230-residue polypeptide: Cytochrome c oxidase subunit 2 (230 aa).

The Mitochondrial intermembrane segment spans residues 1–14; sequence MAHPTQLGFKDAAM. The helical transmembrane segment at 15-45 threads the bilayer; that stretch reads PVMEELLHFHDHALMIVLLISTLVLYIITAM. At 46 to 59 the chain is on the mitochondrial matrix side; sequence VSTKLTNKYILDSQ. A helical transmembrane segment spans residues 60–87; that stretch reads EIEIVWTILPAVILVLIALPSLRILYLM. Topologically, residues 88–230 are mitochondrial intermembrane; it reads DEINDPHLTI…NWSSLMLEDA (143 aa). The Cu cation site is built by histidine 161, cysteine 196, glutamate 198, cysteine 200, histidine 204, and methionine 207. Position 198 (glutamate 198) interacts with Mg(2+).

This sequence belongs to the cytochrome c oxidase subunit 2 family. As to quaternary structure, component of the cytochrome c oxidase (complex IV, CIV), a multisubunit enzyme composed of 14 subunits. The complex is composed of a catalytic core of 3 subunits MT-CO1, MT-CO2 and MT-CO3, encoded in the mitochondrial DNA, and 11 supernumerary subunits COX4I, COX5A, COX5B, COX6A, COX6B, COX6C, COX7A, COX7B, COX7C, COX8 and NDUFA4, which are encoded in the nuclear genome. The complex exists as a monomer or a dimer and forms supercomplexes (SCs) in the inner mitochondrial membrane with NADH-ubiquinone oxidoreductase (complex I, CI) and ubiquinol-cytochrome c oxidoreductase (cytochrome b-c1 complex, complex III, CIII), resulting in different assemblies (supercomplex SCI(1)III(2)IV(1) and megacomplex MCI(2)III(2)IV(2)). Found in a complex with TMEM177, COA6, COX18, COX20, SCO1 and SCO2. Interacts with TMEM177 in a COX20-dependent manner. Interacts with COX20. Interacts with COX16. It depends on Cu cation as a cofactor.

The protein localises to the mitochondrion inner membrane. It carries out the reaction 4 Fe(II)-[cytochrome c] + O2 + 8 H(+)(in) = 4 Fe(III)-[cytochrome c] + 2 H2O + 4 H(+)(out). In terms of biological role, component of the cytochrome c oxidase, the last enzyme in the mitochondrial electron transport chain which drives oxidative phosphorylation. The respiratory chain contains 3 multisubunit complexes succinate dehydrogenase (complex II, CII), ubiquinol-cytochrome c oxidoreductase (cytochrome b-c1 complex, complex III, CIII) and cytochrome c oxidase (complex IV, CIV), that cooperate to transfer electrons derived from NADH and succinate to molecular oxygen, creating an electrochemical gradient over the inner membrane that drives transmembrane transport and the ATP synthase. Cytochrome c oxidase is the component of the respiratory chain that catalyzes the reduction of oxygen to water. Electrons originating from reduced cytochrome c in the intermembrane space (IMS) are transferred via the dinuclear copper A center (CU(A)) of subunit 2 and heme A of subunit 1 to the active site in subunit 1, a binuclear center (BNC) formed by heme A3 and copper B (CU(B)). The BNC reduces molecular oxygen to 2 water molecules using 4 electrons from cytochrome c in the IMS and 4 protons from the mitochondrial matrix. The protein is Cytochrome c oxidase subunit 2 (mt-co2) of Cyprinus carpio (Common carp).